Reading from the N-terminus, the 66-residue chain is Conotoxin TsMEKL-03 (66 aa).

The signal sequence occupies residues 1–9 (VILLMSTQA). Positions 10 to 38 (LIQSGVEKRSNKIKALSKRKTTAESWWEG) are excised as a propeptide. 3 disulfide bridges follow: C40-C54, C47-C58, and C53-C63.

The protein belongs to the conotoxin O2 superfamily. As to expression, expressed by the venom duct.

The protein resides in the secreted. The polypeptide is Conotoxin TsMEKL-03 (Conus tessulatus (Tessellate cone)).